Here is a 709-residue protein sequence, read N- to C-terminus: Nucleobase-ascorbate transporter 12 (709 aa).

Residues Met-1–Gly-145 are disordered. Positions Lys-7 to Pro-19 are enriched in pro residues. Ser-40 is modified (phosphoserine). Residues Gly-41–Leu-53 are compositionally biased toward polar residues. Composition is skewed to basic and acidic residues over residues Glu-89–Pro-98 and Gln-113–Asp-122. Helical transmembrane passes span Tyr-190 to Gly-210, Val-218 to Ser-238, Leu-240 to Ser-260, Ile-283 to Leu-303, Pro-308 to Pro-328, Leu-329 to Leu-349, Ile-361 to Leu-381, Trp-438 to Ala-458, Gly-530 to Ile-550, Pro-551 to Leu-571, Ile-585 to Tyr-605, and Tyr-639 to Leu-659.

The protein belongs to the nucleobase:cation symporter-2 (NCS2) (TC 2.A.40) family. Ubiquitous.

It is found in the cell membrane. The polypeptide is Nucleobase-ascorbate transporter 12 (NAT12) (Arabidopsis thaliana (Mouse-ear cress)).